We begin with the raw amino-acid sequence, 420 residues long: Gamma-glutamyl phosphate reductase (420 aa).

This sequence belongs to the gamma-glutamyl phosphate reductase family.

Its subcellular location is the cytoplasm. It carries out the reaction L-glutamate 5-semialdehyde + phosphate + NADP(+) = L-glutamyl 5-phosphate + NADPH + H(+). It participates in amino-acid biosynthesis; L-proline biosynthesis; L-glutamate 5-semialdehyde from L-glutamate: step 2/2. In terms of biological role, catalyzes the NADPH-dependent reduction of L-glutamate 5-phosphate into L-glutamate 5-semialdehyde and phosphate. The product spontaneously undergoes cyclization to form 1-pyrroline-5-carboxylate. This chain is Gamma-glutamyl phosphate reductase, found in Streptococcus pneumoniae serotype 19F (strain G54).